Consider the following 378-residue polypeptide: UDP-N-acetylenolpyruvoylglucosamine reductase (378 aa).

One can recognise an FAD-binding PCMH-type domain in the interval 15–185; that stretch reads VGGTPERLLE…LSVDLELADH (171 aa). Arg163 is an active-site residue. Ser248 (proton donor) is an active-site residue. Glu370 is an active-site residue.

The protein belongs to the MurB family. Requires FAD as cofactor.

The protein localises to the cytoplasm. It carries out the reaction UDP-N-acetyl-alpha-D-muramate + NADP(+) = UDP-N-acetyl-3-O-(1-carboxyvinyl)-alpha-D-glucosamine + NADPH + H(+). It functions in the pathway cell wall biogenesis; peptidoglycan biosynthesis. Functionally, cell wall formation. In Leifsonia xyli subsp. xyli (strain CTCB07), this protein is UDP-N-acetylenolpyruvoylglucosamine reductase.